A 190-amino-acid polypeptide reads, in one-letter code: Large ribosomal subunit protein uL6 (190 aa).

It belongs to the universal ribosomal protein uL6 family.

The protein is Large ribosomal subunit protein uL6 (RpL9) of Spodoptera frugiperda (Fall armyworm).